Consider the following 35-residue polypeptide: Beta/delta-theraphotoxin-Pre1a (35 aa).

3 disulfide bridges follow: Cys3–Cys18, Cys10–Cys23, and Cys17–Cys30.

Belongs to the neurotoxin 10 (Hwtx-1) family. In terms of tissue distribution, expressed by the venom gland.

The protein resides in the secreted. In terms of biological role, gating-modifier toxin that both inhibits the peak current of human Nav1.1/SCN1A, rat Nav1.2/SCN2A, human Nav1.6/SCN8A, and human Nav1.7/SCN9A and concurrently inhibits fast inactivation of human Nav1.1 and rat Nav1.3/SCN3A. The relative rank order potency for Nav modulation is Nav1.3 (inactivation EC(50)=45 nM) &gt; Nav1.7 &gt; Nav1.2 &gt; Nav1.1 (inactivation) &gt; Nav1.1 &gt; Nav1.6 &gt; Nav1.3 (IC(50)=8 uM). The DII and DIV S3-S4 loops of Nav channel voltage sensors are important for the interaction of this toxin with Nav channels but cannot account for its unique subtype selectivity. It is the variability of the S1-S2 loops between NaV channels which contributes substantially to the selectivity profile observed for this toxin, particularly with regards to fast inactivation. This toxin may bind the channel in the resting state. The polypeptide is Beta/delta-theraphotoxin-Pre1a (Psalmopoeus reduncus (Costa Rican orangemouth tarantula)).